The primary structure comprises 473 residues: Photosystem II CP43 reaction center protein (473 aa).

A propeptide spanning residues 1 to 14 (MKTLYSLRRFYHVE) is cleaved from the precursor. Residue T15 is modified to N-acetylthreonine. The residue at position 15 (T15) is a Phosphothreonine. Helical transmembrane passes span 69–93 (LFEV…PHLA), 134–155 (LIGP…KDKN), 178–200 (KAVW…RKIT), 255–275 (KPFA…LSYS), and 291–312 (WFNN…ASQA). Residue E367 coordinates [CaMn4O5] cluster. Residues 447 to 471 (RARAAAAGFEKGIDRETEPVFFMNP) form a helical membrane-spanning segment.

This sequence belongs to the PsbB/PsbC family. PsbC subfamily. As to quaternary structure, PSII is composed of 1 copy each of membrane proteins PsbA, PsbB, PsbC, PsbD, PsbE, PsbF, PsbH, PsbI, PsbJ, PsbK, PsbL, PsbM, PsbT, PsbX, PsbY, PsbZ, Psb30/Ycf12, at least 3 peripheral proteins of the oxygen-evolving complex and a large number of cofactors. It forms dimeric complexes. Binds multiple chlorophylls and provides some of the ligands for the Ca-4Mn-5O cluster of the oxygen-evolving complex. It may also provide a ligand for a Cl- that is required for oxygen evolution. PSII binds additional chlorophylls, carotenoids and specific lipids. is required as a cofactor.

Its subcellular location is the plastid. It is found in the chloroplast thylakoid membrane. One of the components of the core complex of photosystem II (PSII). It binds chlorophyll and helps catalyze the primary light-induced photochemical processes of PSII. PSII is a light-driven water:plastoquinone oxidoreductase, using light energy to abstract electrons from H(2)O, generating O(2) and a proton gradient subsequently used for ATP formation. The polypeptide is Photosystem II CP43 reaction center protein (Staurastrum punctulatum (Green alga)).